The primary structure comprises 175 residues: FMN reductase (NADH) RutF (175 aa).

The protein belongs to the non-flavoprotein flavin reductase family. RutF subfamily.

It carries out the reaction FMNH2 + NAD(+) = FMN + NADH + 2 H(+). Its function is as follows. Catalyzes the reduction of FMN to FMNH2 which is used to reduce pyrimidine by RutA via the Rut pathway. The polypeptide is FMN reductase (NADH) RutF (Serratia proteamaculans (strain 568)).